The sequence spans 853 residues: Guanine nucleotide exchange protein smcr8a (853 aa).

Residues threonine 47 to asparagine 219 enclose the uDENN FLCN/SMCR8-type domain. 2 disordered regions span residues proline 272 to serine 298 and leucine 418 to serine 454. Polar residues predominate over residues aspartate 280–serine 298. A cDENN FLCN/SMCR8-type domain is found at arginine 316 to threonine 753. Low complexity predominate over residues glycine 421–serine 432. Positions threonine 433–serine 454 are enriched in polar residues. Positions phenylalanine 762–lysine 826 constitute a dDENN FLCN/SMCR8-type domain.

This sequence belongs to the SMCR8 family. Component of the C9orf72-SMCR8 complex. The C9orf72-SMCR8 complex associates with the ATG1/ULK1 kinase complex.

Its subcellular location is the cytoplasm. The protein resides in the nucleus. Component of the C9orf72-SMCR8 complex, a complex that has guanine nucleotide exchange factor (GEF) activity and regulates autophagy. In the complex, C9orf72 and SMCR8 probably constitute the catalytic subunits that promote the exchange of GDP to GTP, converting inactive GDP-bound RAB8A and RAB39B into their active GTP-bound form, thereby promoting autophagosome maturation. The C9orf72-SMCR8 complex also acts as a negative regulator of autophagy initiation by interacting with the ATG1/ULK1 kinase complex and inhibiting its protein kinase activity. The polypeptide is Guanine nucleotide exchange protein smcr8a (smcr8a) (Danio rerio (Zebrafish)).